The following is a 202-amino-acid chain: Mevalonate-3-phosphate 5-kinase (202 aa).

The catalysed reaction is (R)-3-phosphomevalonate + ATP = (R)-3,5-bisphosphomevalonate + ADP + H(+). It functions in the pathway isoprenoid biosynthesis; isopentenyl diphosphate biosynthesis via mevalonate pathway. In terms of biological role, phosphorylates mevalonate 3-phosphate to form mevalonate 3,5-bisphosphate. Functions in an alternative mevalonate pathway, only present in extreme acidophiles of the Thermoplasmatales order, which passes through mevalonate 3-phosphate rather than mevalonate 5-phosphate. This Thermoplasma acidophilum (strain ATCC 25905 / DSM 1728 / JCM 9062 / NBRC 15155 / AMRC-C165) protein is Mevalonate-3-phosphate 5-kinase.